The sequence spans 379 residues: Chaperone protein DnaJ (379 aa).

A J domain is found at 5 to 70; it reads DYYESLGVAK…QKRAAYDQYG (66 aa). The segment at 134–212 adopts a CR-type zinc-finger fold; that stretch reads GVTKEIRIPA…CHGHGRVEKS (79 aa). Zn(2+) contacts are provided by cysteine 147, cysteine 150, cysteine 164, cysteine 167, cysteine 186, cysteine 189, cysteine 200, and cysteine 203. 4 CXXCXGXG motif repeats span residues 147–154, 164–171, 186–193, and 200–207; these read CDVCHGNG, CPTCHGNG, CPHCHGRG, and CIKCHGHG.

The protein belongs to the DnaJ family. Homodimer. Requires Zn(2+) as cofactor.

It localises to the cytoplasm. Functionally, participates actively in the response to hyperosmotic and heat shock by preventing the aggregation of stress-denatured proteins and by disaggregating proteins, also in an autonomous, DnaK-independent fashion. Unfolded proteins bind initially to DnaJ; upon interaction with the DnaJ-bound protein, DnaK hydrolyzes its bound ATP, resulting in the formation of a stable complex. GrpE releases ADP from DnaK; ATP binding to DnaK triggers the release of the substrate protein, thus completing the reaction cycle. Several rounds of ATP-dependent interactions between DnaJ, DnaK and GrpE are required for fully efficient folding. Also involved, together with DnaK and GrpE, in the DNA replication of plasmids through activation of initiation proteins. The polypeptide is Chaperone protein DnaJ (Pectobacterium atrosepticum (strain SCRI 1043 / ATCC BAA-672) (Erwinia carotovora subsp. atroseptica)).